Consider the following 485-residue polypeptide: Glutamyl-tRNA(Gln) amidotransferase subunit A (485 aa).

Residues K76 and S151 each act as charge relay system in the active site. The Acyl-ester intermediate role is filled by S175.

Belongs to the amidase family. GatA subfamily. As to quaternary structure, heterotrimer of A, B and C subunits.

The enzyme catalyses L-glutamyl-tRNA(Gln) + L-glutamine + ATP + H2O = L-glutaminyl-tRNA(Gln) + L-glutamate + ADP + phosphate + H(+). Allows the formation of correctly charged Gln-tRNA(Gln) through the transamidation of misacylated Glu-tRNA(Gln) in organisms which lack glutaminyl-tRNA synthetase. The reaction takes place in the presence of glutamine and ATP through an activated gamma-phospho-Glu-tRNA(Gln). The chain is Glutamyl-tRNA(Gln) amidotransferase subunit A from Pelagibacter ubique (strain HTCC1062).